The chain runs to 255 residues: MARRPLVMGNWKLNGSKAFTKELITGLKDELNAVSGCDVAIAPPVMYLAEAETALVSSDIALGTQNVDLNKQGAFTGDISTEMLKDFGVKYVIIGHSERRQYHHESDEFIAKKFGVLKDAGLVPVLCIGESEAENEAGKTEEVCARQIDAVMNTLGVEAFNGAVIAYEPIWAIGTGKSATPAQAQAVHAFIRGHIAKQSQAVAERVIIQYGGSVNDANAAELFTQPDIDGALVGGASLKASAFAVIVKAAAKAKN.

10–12 (NWK) provides a ligand contact to substrate. His-96 acts as the Electrophile in catalysis. Residue Glu-168 is the Proton acceptor of the active site. Substrate contacts are provided by residues Gly-174, Ser-213, and 234–235 (GG).

It belongs to the triosephosphate isomerase family. As to quaternary structure, homodimer.

It localises to the cytoplasm. It catalyses the reaction D-glyceraldehyde 3-phosphate = dihydroxyacetone phosphate. It participates in carbohydrate biosynthesis; gluconeogenesis. The protein operates within carbohydrate degradation; glycolysis; D-glyceraldehyde 3-phosphate from glycerone phosphate: step 1/1. Functionally, involved in the gluconeogenesis. Catalyzes stereospecifically the conversion of dihydroxyacetone phosphate (DHAP) to D-glyceraldehyde-3-phosphate (G3P). This chain is Triosephosphate isomerase, found in Histophilus somni (strain 129Pt) (Haemophilus somnus).